The chain runs to 199 residues: Recombination protein RecR (199 aa).

The segment at 56–71 (CSICFNVSQDDQCRIC) adopts a C4-type zinc-finger fold. In terms of domain architecture, Toprim spans 79–174 (SVLCVVEEYK…RVTRLASGLP (96 aa)).

Belongs to the RecR family.

May play a role in DNA repair. It seems to be involved in an RecBC-independent recombinational process of DNA repair. It may act with RecF and RecO. The protein is Recombination protein RecR of Nocardioides sp. (strain ATCC BAA-499 / JS614).